A 261-amino-acid chain; its full sequence is Monensin polyketide synthase putative ketoacyl reductase (261 aa).

10–34 is an NAD(+) binding site; it reads LVTGATSGIGLATARLLAAQGHLVF. Position 144 (serine 144) interacts with substrate. The active-site Proton acceptor is the tyrosine 157.

The protein belongs to the short-chain dehydrogenases/reductases (SDR) family.

It participates in antifungal biosynthesis; monensin biosynthesis. In Streptomyces virginiae (Streptomyces cinnamonensis), this protein is Monensin polyketide synthase putative ketoacyl reductase.